The primary structure comprises 86 residues: Probable weak neurotoxin NNAM2I (86 aa).

The N-terminal stretch at 1–21 (MKTLPLTLVVVTIVCLDLGYT) is a signal peptide. 5 disulfide bridges follow: C24/C45, C27/C32, C38/C63, C67/C78, and C79/C84.

The protein belongs to the three-finger toxin family. Ancestral subfamily. Orphan group II sub-subfamily. As to expression, expressed by the venom gland.

It localises to the secreted. Functionally, binds with low affinity to muscular (alpha-1-beta-1-delta-epsilon/CHRNA1-CHRNB1-CHRND-CHRNE) and very low affinity to neuronal (alpha-7/CHRNA7) nicotinic acetylcholine receptor (nAChR). In Naja atra (Chinese cobra), this protein is Probable weak neurotoxin NNAM2I.